A 306-amino-acid chain; its full sequence is D-alanine--D-alanine ligase (306 aa).

In terms of domain architecture, ATP-grasp spans 101–303; the sequence is KYLWQGCGLP…FSQLVARILE (203 aa). An ATP-binding site is contributed by 134–189; sequence IDALGLPLFVKPSREGSSVGISRVNQASELQAALQEAFRFDDEVLVEAFLSGPEYT. Residues Asp257, Glu270, and Asn272 each coordinate Mg(2+).

Belongs to the D-alanine--D-alanine ligase family. Requires Mg(2+) as cofactor. Mn(2+) serves as cofactor.

The protein localises to the cytoplasm. The enzyme catalyses 2 D-alanine + ATP = D-alanyl-D-alanine + ADP + phosphate + H(+). It participates in cell wall biogenesis; peptidoglycan biosynthesis. In terms of biological role, cell wall formation. This chain is D-alanine--D-alanine ligase, found in Erwinia tasmaniensis (strain DSM 17950 / CFBP 7177 / CIP 109463 / NCPPB 4357 / Et1/99).